Consider the following 380-residue polypeptide: ATP phosphoribosyltransferase regulatory subunit (380 aa).

Belongs to the class-II aminoacyl-tRNA synthetase family. HisZ subfamily. In terms of assembly, heteromultimer composed of HisG and HisZ subunits.

It localises to the cytoplasm. Its pathway is amino-acid biosynthesis; L-histidine biosynthesis; L-histidine from 5-phospho-alpha-D-ribose 1-diphosphate: step 1/9. In terms of biological role, required for the first step of histidine biosynthesis. May allow the feedback regulation of ATP phosphoribosyltransferase activity by histidine. The protein is ATP phosphoribosyltransferase regulatory subunit of Thermoanaerobacter pseudethanolicus (strain ATCC 33223 / 39E) (Clostridium thermohydrosulfuricum).